We begin with the raw amino-acid sequence, 296 residues long: MNKEQLEKMTHGKGFIAALDQSGGSTPKALKEYGVNEDQYSNEDEMFQLVHDMRTRVVTSPSFSPDKILGAILFEQTMDREVEGKYTGDYLADKGVVPFLKVDKGLAEEKNGVQLMKPIDDLDETLDRANERHIFGTKMRSNILELNEQGIKDVVEQQFEFAKKIIAKGLVPIIEPEVNINAKDKSEIEKVLKAEIKKGLDSLNDDQLVMLKLTIPTEANLYKDLADHPNVVRVVVLSGGYSRDEANKLLKDNDELIASFSRALASDLRASQSQEEFDKALGDAVDSIYDASVNKN.

Glutamate 175 acts as the Proton acceptor in catalysis. The active-site Schiff-base intermediate with dihydroxyacetone-P is the lysine 212.

The protein belongs to the class I fructose-bisphosphate aldolase family.

It catalyses the reaction beta-D-fructose 1,6-bisphosphate = D-glyceraldehyde 3-phosphate + dihydroxyacetone phosphate. The protein operates within carbohydrate degradation; glycolysis; D-glyceraldehyde 3-phosphate and glycerone phosphate from D-glucose: step 4/4. This chain is Fructose-bisphosphate aldolase class 1 (fda), found in Staphylococcus epidermidis (strain ATCC 12228 / FDA PCI 1200).